The sequence spans 152 residues: Large ribosomal subunit protein uL13 (152 aa).

The segment at 129 to 152 (EHPHEAQSPEVLDVKSMNKKNTRS) is disordered.

It belongs to the universal ribosomal protein uL13 family. In terms of assembly, part of the 50S ribosomal subunit.

Its function is as follows. This protein is one of the early assembly proteins of the 50S ribosomal subunit, although it is not seen to bind rRNA by itself. It is important during the early stages of 50S assembly. The sequence is that of Large ribosomal subunit protein uL13 from Ruegeria sp. (strain TM1040) (Silicibacter sp.).